The sequence spans 919 residues: UPF0182 protein SUN_1015 (919 aa).

7 helical membrane-spanning segments follow: residues 8–28, 51–71, 102–122, 158–178, 207–227, 246–266, and 274–294; these read IIIT…VDYY, ILSF…HIHF, AVAW…GSYA, VYQF…IGVL, LTAF…YNIL, IPAY…LFFY, and VIVS…WIYP.

Belongs to the UPF0182 family.

It is found in the cell membrane. The polypeptide is UPF0182 protein SUN_1015 (Sulfurovum sp. (strain NBC37-1)).